The chain runs to 81 residues: Photosystem I iron-sulfur center (81 aa).

4Fe-4S ferredoxin-type domains are found at residues 2-31 (SHAV…MVPW) and 37-68 (GQIA…IRVY). Residues Cys11, Cys14, Cys17, Cys21, Cys48, Cys51, Cys54, and Cys58 each contribute to the [4Fe-4S] cluster site.

The cyanobacterial PSI reaction center is composed of one copy each of PsaA,B,C,D,E,F,I,J,K,L,M and X, and forms trimeric complexes. It depends on [4Fe-4S] cluster as a cofactor.

It localises to the cellular thylakoid membrane. The catalysed reaction is reduced [plastocyanin] + hnu + oxidized [2Fe-2S]-[ferredoxin] = oxidized [plastocyanin] + reduced [2Fe-2S]-[ferredoxin]. Its function is as follows. Apoprotein for the two 4Fe-4S centers FA and FB of photosystem I (PSI); essential for photochemical activity. FB is the terminal electron acceptor of PSI, donating electrons to ferredoxin. The C-terminus interacts with PsaA/B/D and helps assemble the protein into the PSI complex. Required for binding of PsaD and PsaE to PSI. PSI is a plastocyanin/cytochrome c6-ferredoxin oxidoreductase, converting photonic excitation into a charge separation, which transfers an electron from the donor P700 chlorophyll pair to the spectroscopically characterized acceptors A0, A1, FX, FA and FB in turn. In Synechococcus sp. (strain WH8103), this protein is Photosystem I iron-sulfur center.